A 164-amino-acid polypeptide reads, in one-letter code: Probable ubiquitin-conjugating enzyme E2 7 (164 aa).

Positions 3 to 163 (QSSLLLKKQL…VAQCVRRSQE (161 aa)) constitute a UBC core domain. Cysteine 88 (glycyl thioester intermediate) is an active-site residue.

Belongs to the ubiquitin-conjugating enzyme family.

The catalysed reaction is S-ubiquitinyl-[E1 ubiquitin-activating enzyme]-L-cysteine + [E2 ubiquitin-conjugating enzyme]-L-cysteine = [E1 ubiquitin-activating enzyme]-L-cysteine + S-ubiquitinyl-[E2 ubiquitin-conjugating enzyme]-L-cysteine.. It participates in protein modification; protein ubiquitination. Its function is as follows. Catalyzes the covalent attachment of ubiquitin to other proteins. The polypeptide is Probable ubiquitin-conjugating enzyme E2 7 (ubc-7) (Caenorhabditis elegans).